A 583-amino-acid polypeptide reads, in one-letter code: MASKVSPSCRLVFCLLISAAVLRPGLGWYTVNSAYGDTIVMPCRLDVPQNLMFGKWKYEKPDGSPVFIAFRSSTKKSVQYDDVPEYKDRLSLSENYTLSIANAKISDEKRFVCMLVTEDNVFEAPTLVKVFKQPSKPEIVNKAPFLETDQLKKLGDCISRDSYPDGNITWYRNGKVLQPVEGEVAILFKKEIDPGTQLYTVTSSLEYKTTRSDIQMPFTCSVTYYGPSGQKTIYSEQEIFDIYYPTEQVTIQVLPPKNAIKEGDNITLQCLGNGNPPPEEFMFYLPGQPEGIRSSNTYTLTDVRRNATGDYKCSLIDKRNMAASTTITVHYLDLSLNPSGEVTKQIGDTLPVSCTISASRNATVVWMKDNIRLRSSPSFSSLHYQDAGNYVCETALQEVEGLKKRESLTLIVEGKPQIKMTKKTDPSGLSKTIICHVEGFPKPAIHWTITGSGSVINQTEESPYINGRYYSKIIISPEENVTLTCTAENQLERTVNSLNVSAISIPEHDEADDISDENREKVNDQAKLIVGIVVGLLLAALVAGVVYWLYMKKSKTASKHVNKDLGNMEENKKLEENNHKTEA.

The N-terminal stretch at 1 to 27 is a signal peptide; that stretch reads MASKVSPSCRLVFCLLISAAVLRPGLG. 2 consecutive Ig-like V-type domains span residues 28 to 120 and 125 to 234; these read WYTV…TEDN and PTLV…KTIY. The Extracellular portion of the chain corresponds to 28–527; that stretch reads WYTVNSAYGD…NREKVNDQAK (500 aa). 2 cysteine pairs are disulfide-bonded: C43/C113 and C157/C220. Residues N95, N167, N265, N306, N361, N457, N480, and N499 are each glycosylated (N-linked (GlcNAc...) asparagine). Ig-like C2-type domains are found at residues 245–328, 333–409, and 416–501; these read PTEQ…TTIT, DLSL…ESLT, and PQIK…LNVS. Intrachain disulfides connect C270-C313, C354-C392, and C435-C485. The chain crosses the membrane as a helical span at residues 528–549; that stretch reads LIVGIVVGLLLAALVAGVVYWL. Residues 550 to 583 are Cytoplasmic-facing; sequence YMKKSKTASKHVNKDLGNMEENKKLEENNHKTEA. Residues 562–583 are disordered; the sequence is NKDLGNMEENKKLEENNHKTEA. Residues 569-583 are compositionally biased toward basic and acidic residues; that stretch reads EENKKLEENNHKTEA.

In terms of assembly, homodimer. Interacts (via extracellular domain) with CD6 (via extracellular domain). Homodimerization and interaction with CD6 involve the same region and cannot occur simultaneously. The affinity for CD6 is much higher than the affinity for self-association. Interacts (via glycosylated extracellular domain) with LGALS1 and LGALS3. Interaction with LGALS1 or LGALS3 inhibits interaction with CD6. Post-translationally, glycosylated. As to expression, detected on brain motor neurons, in differentiating retinal ganglion cells and in adult retina. Detected on leukocytes and on lymphatic endothelial cells. Detected in spleen B cells and T-cells (at protein level). Detected in adult brain and embryonic spinal cord. Expressed at high levels in the brain, and lung, and at lower levels in the liver, and the kidney, as well as by activated leukocytes.

Its subcellular location is the cell membrane. It localises to the cell projection. The protein resides in the axon. The protein localises to the dendrite. Cell adhesion molecule that mediates both heterotypic cell-cell contacts via its interaction with CD6, as well as homotypic cell-cell contacts. Promotes T-cell activation and proliferation via its interactions with CD6. Contributes to the formation and maturation of the immunological synapse via its interactions with CD6. Mediates homotypic interactions with cells that express ALCAM. Mediates attachment of dendritic cells onto endothelial cells via homotypic interaction. Inhibits endothelial cell migration and promotes endothelial tube formation via homotypic interactions. Required for normal organization of the lymph vessel network. Required for normal hematopoietic stem cell engraftment in the bone marrow. Plays a role in hematopoiesis; required for normal numbers of hematopoietic stem cells in bone marrow. Promotes in vitro osteoblast proliferation and differentiation. Promotes neurite extension, axon growth and axon guidance; axons grow preferentially on surfaces that contain ALCAM. Mediates outgrowth and pathfinding for retinal ganglion cell axons. The polypeptide is CD166 antigen (Alcam) (Mus musculus (Mouse)).